A 142-amino-acid polypeptide reads, in one-letter code: Heat shock protein HSP.16.4 (142 aa).

Residues 27–142 (NLFNDLKSNL…KEIKTSIPIE (116 aa)) enclose the sHSP domain.

It belongs to the small heat shock protein (HSP20) family.

The protein resides in the cytoplasm. The sequence is that of Heat shock protein HSP.16.4 from Streptococcus thermophilus.